Consider the following 464-residue polypeptide: Armadillo repeat-containing protein 6 homolog (464 aa).

Residue threonine 9 is modified to Phosphothreonine. 4 ARM repeats span residues alanine 235–valine 275, glycine 287–valine 331, alanine 332–glycine 374, and isoleucine 375–glycine 418.

The protein belongs to the ARMC6 family.

In Drosophila melanogaster (Fruit fly), this protein is Armadillo repeat-containing protein 6 homolog.